The following is a 146-amino-acid chain: UPF0742 protein C1348.03 (146 aa).

The helical transmembrane segment at Leu-38 to Ser-60 threads the bilayer.

Belongs to the UPF0742 family.

Its subcellular location is the cytoplasm. The protein localises to the nucleus membrane. The polypeptide is UPF0742 protein C1348.03 (Schizosaccharomyces pombe (strain 972 / ATCC 24843) (Fission yeast)).